Here is a 504-residue protein sequence, read N- to C-terminus: Multidrug efflux pump LfrA (504 aa).

14 helical membrane passes run 19-39 (WVAL…NTVL), 58-78 (LWIV…MGSL), 87-107 (LLLI…FAPS), 110-130 (LLVG…PSTL), 145-165 (LAIA…PIVG), 172-192 (FHWG…LVLG), 206-226 (PFDP…VWAV), 233-253 (GLSA…ALFV), 275-295 (TSSI…IFFI), 309-329 (TAGL…LAVV), 338-358 (DTLM…ILLF), 361-381 (NLTV…VGVS), 408-428 (AYEL…TAFY), and 480-500 (IAPT…VVGV).

This sequence belongs to the major facilitator superfamily.

The protein localises to the cell inner membrane. Inhibited by the protonophore carbonyl cyanide m-chorophenylhydrazone (CCCP). Ethidium bromide efflux is inhibited by chlorpromazine, thioridazine and verapamil. In terms of biological role, energy-dependent efflux pump that contributes to drug resistance. Catalyzes the efflux of norfloxacin and several related fluoroquinolones (FQ). Contributes significantly to the intrinsic MICs for ethidium bromide and acriflavine. Overexpression confers low-level resistance to hydrophilic FQ such as ciprofloxacin, ofloxacin and levofloxacin, and to ethidium bromide, acridine, acriflavine, rhodamine 123 and some quaternary ammonium compounds. May contribute to resistance to certain beta-lactams. Probably uses the proton motive force to export drugs. The polypeptide is Multidrug efflux pump LfrA (Mycolicibacterium smegmatis (strain ATCC 700084 / mc(2)155) (Mycobacterium smegmatis)).